The primary structure comprises 180 residues: MSDSTTIARPYAKAIFEHALAEKKLSEWSEYLTLLAQVVLTPQATQFIANPASTDEQQIELLIEVCGSKFKKNDALNNLIKLLTTNKRLMLLPEIEALYEVYRAEQEKILEVDVVSYSELTPAQQQRLSESLSQRLSRKVSLKISIDPSLLGGALIRAGDLVIDGSVRGKLNMLGTSLAA.

The protein belongs to the ATPase delta chain family. In terms of assembly, F-type ATPases have 2 components, F(1) - the catalytic core - and F(0) - the membrane proton channel. F(1) has five subunits: alpha(3), beta(3), gamma(1), delta(1), epsilon(1). F(0) has three main subunits: a(1), b(2) and c(10-14). The alpha and beta chains form an alternating ring which encloses part of the gamma chain. F(1) is attached to F(0) by a central stalk formed by the gamma and epsilon chains, while a peripheral stalk is formed by the delta and b chains.

The protein resides in the cell inner membrane. Functionally, f(1)F(0) ATP synthase produces ATP from ADP in the presence of a proton or sodium gradient. F-type ATPases consist of two structural domains, F(1) containing the extramembraneous catalytic core and F(0) containing the membrane proton channel, linked together by a central stalk and a peripheral stalk. During catalysis, ATP synthesis in the catalytic domain of F(1) is coupled via a rotary mechanism of the central stalk subunits to proton translocation. This protein is part of the stalk that links CF(0) to CF(1). It either transmits conformational changes from CF(0) to CF(1) or is implicated in proton conduction. The sequence is that of ATP synthase subunit delta from Legionella pneumophila subsp. pneumophila (strain Philadelphia 1 / ATCC 33152 / DSM 7513).